Reading from the N-terminus, the 717-residue chain is Fatty acid oxidation complex subunit alpha (717 aa).

Positions 1–190 (MIHAGNAITV…KDGAVDAVVS (190 aa)) are enoyl-CoA hydratase/isomerase. D298 serves as a coordination point for substrate. The interval 313-717 (HPVNQAAVLG…MAENNKKFYG (405 aa)) is 3-hydroxyacyl-CoA dehydrogenase. NAD(+)-binding positions include M326, D345, 402-404 (VTE), K409, and S431. Residue H452 is the For 3-hydroxyacyl-CoA dehydrogenase activity of the active site. NAD(+) is bound at residue N455. A substrate-binding site is contributed by N502.

This sequence in the N-terminal section; belongs to the enoyl-CoA hydratase/isomerase family. It in the C-terminal section; belongs to the 3-hydroxyacyl-CoA dehydrogenase family. In terms of assembly, heterotetramer of two alpha chains (FadB) and two beta chains (FadA).

It catalyses the reaction a (3S)-3-hydroxyacyl-CoA + NAD(+) = a 3-oxoacyl-CoA + NADH + H(+). The catalysed reaction is a (3S)-3-hydroxyacyl-CoA = a (2E)-enoyl-CoA + H2O. The enzyme catalyses a 4-saturated-(3S)-3-hydroxyacyl-CoA = a (3E)-enoyl-CoA + H2O. It carries out the reaction (3S)-3-hydroxybutanoyl-CoA = (3R)-3-hydroxybutanoyl-CoA. It catalyses the reaction a (3Z)-enoyl-CoA = a 4-saturated (2E)-enoyl-CoA. The catalysed reaction is a (3E)-enoyl-CoA = a 4-saturated (2E)-enoyl-CoA. It participates in lipid metabolism; fatty acid beta-oxidation. In terms of biological role, involved in the aerobic and anaerobic degradation of long-chain fatty acids via beta-oxidation cycle. Catalyzes the formation of 3-oxoacyl-CoA from enoyl-CoA via L-3-hydroxyacyl-CoA. It can also use D-3-hydroxyacyl-CoA and cis-3-enoyl-CoA as substrate. This Acinetobacter baylyi (strain ATCC 33305 / BD413 / ADP1) protein is Fatty acid oxidation complex subunit alpha.